We begin with the raw amino-acid sequence, 76 residues long: Bowman-Birk type proteinase inhibitor DE-4 (76 aa).

7 disulfides stabilise this stretch: Cys15–Cys69, Cys16–Cys31, Cys19–Cys65, Cys21–Cys29, Cys39–Cys46, Cys43–Cys58, and Cys48–Cys56.

The protein belongs to the Bowman-Birk serine protease inhibitor family.

In Macrotyloma axillare (Perennial horse gram), this protein is Bowman-Birk type proteinase inhibitor DE-4.